The following is a 143-amino-acid chain: Histone H2AX (143 aa).

Residues 1–22 (MSGRGKTGGKARAKAKSRSSRA) are disordered. Residue Ser-2 is modified to N-acetylserine. A Phosphoserine modification is found at Ser-2. Residues Lys-6 and Lys-10 each carry the N6-acetyllysine modification. Over residues 7–19 (TGGKARAKAKSRS) the composition is skewed to basic residues. Residue Lys-10 is modified to N6-lactoyllysine; alternate. Glycyl lysine isopeptide (Lys-Gly) (interchain with G-Cter in ubiquitin) cross-links involve residues Lys-14 and Lys-16. Lys-37 carries the post-translational modification N6-acetyllysine. Lys-120 is covalently cross-linked (Glycyl lysine isopeptide (Lys-Gly) (interchain with G-Cter in ubiquitin)). Residues 121–143 (TSATVGPKAPSGGKKATQASQEY) form a disordered region. At Ser-122 the chain carries Phosphoserine. Residues Lys-128 and Lys-135 each participate in a glycyl lysine isopeptide (Lys-Gly) (interchain with G-Cter in SUMO2) cross-link. A Phosphoserine; by ATM, ATR and PRKDC modification is found at Ser-140. Residues 140–141 (SQ) carry the [ST]-Q motif motif. Position 143 is a phosphotyrosine; by WSTF (Tyr-143).

Belongs to the histone H2A family. In terms of assembly, the nucleosome is a histone octamer containing two molecules each of H2A, H2B, H3 and H4 assembled in one H3-H4 heterotetramer and two H2A-H2B heterodimers. The octamer wraps approximately 147 bp of DNA. Interacts with numerous proteins required for DNA damage signaling and repair when phosphorylated on Ser-140. These include MDC1, TP53BP1, BRCA1 and the MRN complex, composed of MRE11, RAD50, and NBN. Interaction with the MRN complex is mediated at least in part by NBN. Also interacts with DHX9/NDHII when phosphorylated on Ser-140 and MCPH1 when phosphorylated at Ser-140 or Tyr-143. Interacts with ARRB2; the interaction is detected in the nucleus upon OR1D2 stimulation. Interacts with WRAP53/TCAB1. Interacts with HDGFL2. Interacts with DNA damage up-regulated protein DDUP. Forms a complex with DDUP and RAD18 following DDUP phosphorylation. As to quaternary structure, (Microbial infection) Interacts with Epstein-Barr virus protein EBNA6. Phosphorylated by VRK1. Phosphorylated on Ser-140 (to form gamma-H2AX or H2AX139ph) in response to DNA double strand breaks (DSBs) generated by exogenous genotoxic agents and by stalled replication forks, and may also occur during meiotic recombination events and immunoglobulin class switching in lymphocytes. Phosphorylation can extend up to several thousand nucleosomes from the actual site of the DSB and may mark the surrounding chromatin for recruitment of proteins required for DNA damage signaling and repair. Widespread phosphorylation may also serve to amplify the damage signal or aid repair of persistent lesions. Phosphorylation of Ser-140 (H2AX139ph) in response to ionizing radiation is mediated by both ATM and PRKDC while defects in DNA replication induce Ser-140 phosphorylation (H2AX139ph) subsequent to activation of ATR and PRKDC. Dephosphorylation of Ser-140 by PP2A is required for DNA DSB repair. In meiosis, Ser-140 phosphorylation (H2AX139ph) may occur at synaptonemal complexes during leptotene as an ATM-dependent response to the formation of programmed DSBs by SPO11. Ser-140 phosphorylation (H2AX139ph) may subsequently occurs at unsynapsed regions of both autosomes and the XY bivalent during zygotene, downstream of ATR and BRCA1 activation. Ser-140 phosphorylation (H2AX139ph) may also be required for transcriptional repression of unsynapsed chromatin and meiotic sex chromosome inactivation (MSCI), whereby the X and Y chromosomes condense in pachytene to form the heterochromatic XY-body. During immunoglobulin class switch recombination in lymphocytes, Ser-140 phosphorylation (H2AX139ph) may occur at sites of DNA-recombination subsequent to activation of the activation-induced cytidine deaminase AICDA. Phosphorylation at Tyr-143 (H2AXY142ph) by BAZ1B/WSTF determines the relative recruitment of either DNA repair or pro-apoptotic factors. Phosphorylation at Tyr-143 (H2AXY142ph) favors the recruitment of APBB1/FE65 and pro-apoptosis factors such as MAPK8/JNK1, triggering apoptosis. In contrast, dephosphorylation of Tyr-143 by EYA proteins (EYA1, EYA2, EYA3 or EYA4) favors the recruitment of MDC1-containing DNA repair complexes to the tail of phosphorylated Ser-140 (H2AX139ph). Post-translationally, monoubiquitination of Lys-120 (H2AXK119ub) by RING1 and RNF2/RING2 complex gives a specific tag for epigenetic transcriptional repression. Following DNA double-strand breaks (DSBs), it is ubiquitinated through 'Lys-63' linkage of ubiquitin moieties by the E2 ligase UBE2N and the E3 ligases RNF8 and RNF168, leading to the recruitment of repair proteins to sites of DNA damage. Ubiquitination at Lys-14 and Lys-16 (H2AK13Ub and H2AK15Ub, respectively) in response to DNA damage is initiated by RNF168 that mediates monoubiquitination at these 2 sites, and 'Lys-63'-linked ubiquitin are then conjugated to monoubiquitin; RNF8 is able to extend 'Lys-63'-linked ubiquitin chains in vitro. H2AK119Ub and ionizing radiation-induced 'Lys-63'-linked ubiquitination (H2AK13Ub and H2AK15Ub) are distinct events. In terms of processing, acetylation at Lys-6 (H2AXK5ac) by KAT5 component of the NuA4 histone acetyltransferase complex promotes NBN/NBS1 assembly at the sites of DNA damage. Acetylation at Lys-37 increases in S and G2 phases. This modification has been proposed to play a role in DNA double-strand break repair.

Its subcellular location is the nucleus. The protein localises to the chromosome. In terms of biological role, variant histone H2A which replaces conventional H2A in a subset of nucleosomes. Nucleosomes wrap and compact DNA into chromatin, limiting DNA accessibility to the cellular machineries which require DNA as a template. Histones thereby play a central role in transcription regulation, DNA repair, DNA replication and chromosomal stability. DNA accessibility is regulated via a complex set of post-translational modifications of histones, also called histone code, and nucleosome remodeling. Required for checkpoint-mediated arrest of cell cycle progression in response to low doses of ionizing radiation and for efficient repair of DNA double strand breaks (DSBs) specifically when modified by C-terminal phosphorylation. The chain is Histone H2AX from Homo sapiens (Human).